The primary structure comprises 518 residues: Protein MGF 505-6R (518 aa).

ANK repeat units follow at residues 54-83, 129-158, 261-290, 292-322, and 324-351; these read SINDALLLAGEEGDTDVVQLLLLWEGNLHY, ECDFICLLQHAVKCDMLSILVKYKEDLLNV, SVNRALSYAVIDNKRKIIDYLVRHENIPRG, IERLLHLAVKKQSSRKTLNLLLSYINYKVKN, and KKLVEHVVDHNSTLVLKILLEKKENLVD.

Belongs to the asfivirus MGF 505 family.

Its function is as follows. Plays a role in virus cell tropism, and may be required for efficient virus replication in macrophages. In Ornithodoros (relapsing fever ticks), this protein is Protein MGF 505-6R.